A 152-amino-acid polypeptide reads, in one-letter code: Transcriptional regulator MraZ (152 aa).

SpoVT-AbrB domains lie at 5–52 (ASAI…PLEA) and 81–124 (AHEC…DEAA).

The protein belongs to the MraZ family. As to quaternary structure, forms oligomers.

The protein resides in the cytoplasm. The protein localises to the nucleoid. The polypeptide is Transcriptional regulator MraZ (Shewanella loihica (strain ATCC BAA-1088 / PV-4)).